Here is a 281-residue protein sequence, read N- to C-terminus: Aminoglycoside N(3)-acetyltransferase IX (281 aa).

This sequence belongs to the antibiotic N-acetyltransferase family.

The enzyme catalyses a 2-deoxystreptamine antibiotic + acetyl-CoA = an N(3)-acetyl-2-deoxystreptamine antibiotic + CoA + H(+). Functionally, resistance to neomycin. The sequence is that of Aminoglycoside N(3)-acetyltransferase IX (aacC9) from Micromonospora chalcea.